The following is a 429-amino-acid chain: TNF receptor-associated factor family protein DDB_G0267744 (429 aa).

The RING-type; degenerate zinc finger occupies 22 to 60; sequence CVICSHLQVDIYQCVEGHFACKNCFLKMIELKKQCMTCR. TRAF-type zinc fingers lie at residues 151–203 and 204–265; these read HHLK…GEFN and NHQD…SNSE.

It belongs to the TNF receptor-associated factor family.

Its subcellular location is the cytoplasm. In terms of biological role, probable adapter protein and signal transducer that links members of the tumor necrosis factor receptor family to different signaling pathways by association with the receptor cytoplasmic domain and kinases. The protein is TNF receptor-associated factor family protein DDB_G0267744 of Dictyostelium discoideum (Social amoeba).